A 355-amino-acid polypeptide reads, in one-letter code: tRNA N6-adenosine threonylcarbamoyltransferase (355 aa).

Fe cation-binding residues include His113 and His117. Substrate contacts are provided by residues 135–139 (LASGG), Asp168, Gly181, and Asn279. Fe cation is bound at residue Asp307.

It belongs to the KAE1 / TsaD family. The cofactor is Fe(2+).

Its subcellular location is the cytoplasm. The catalysed reaction is L-threonylcarbamoyladenylate + adenosine(37) in tRNA = N(6)-L-threonylcarbamoyladenosine(37) in tRNA + AMP + H(+). Required for the formation of a threonylcarbamoyl group on adenosine at position 37 (t(6)A37) in tRNAs that read codons beginning with adenine. Is involved in the transfer of the threonylcarbamoyl moiety of threonylcarbamoyl-AMP (TC-AMP) to the N6 group of A37, together with TsaE and TsaB. TsaD likely plays a direct catalytic role in this reaction. In Bradyrhizobium sp. (strain BTAi1 / ATCC BAA-1182), this protein is tRNA N6-adenosine threonylcarbamoyltransferase.